We begin with the raw amino-acid sequence, 484 residues long: Protein nucleotidyltransferase YdiU (484 aa).

ATP-binding residues include Gly87, Gly89, Arg90, Lys110, Asp122, Gly123, Arg173, and Arg180. Asp249 serves as the catalytic Proton acceptor. Residues Asn250 and Asp259 each coordinate Mg(2+). An ATP-binding site is contributed by Asp259. The segment at 463-484 (EQEKYAELPPPSDRPYRTFCGT) is disordered.

This sequence belongs to the SELO family. Mg(2+) serves as cofactor. The cofactor is Mn(2+).

The catalysed reaction is L-seryl-[protein] + ATP = 3-O-(5'-adenylyl)-L-seryl-[protein] + diphosphate. It carries out the reaction L-threonyl-[protein] + ATP = 3-O-(5'-adenylyl)-L-threonyl-[protein] + diphosphate. It catalyses the reaction L-tyrosyl-[protein] + ATP = O-(5'-adenylyl)-L-tyrosyl-[protein] + diphosphate. The enzyme catalyses L-histidyl-[protein] + UTP = N(tele)-(5'-uridylyl)-L-histidyl-[protein] + diphosphate. The catalysed reaction is L-seryl-[protein] + UTP = O-(5'-uridylyl)-L-seryl-[protein] + diphosphate. It carries out the reaction L-tyrosyl-[protein] + UTP = O-(5'-uridylyl)-L-tyrosyl-[protein] + diphosphate. Functionally, nucleotidyltransferase involved in the post-translational modification of proteins. It can catalyze the addition of adenosine monophosphate (AMP) or uridine monophosphate (UMP) to a protein, resulting in modifications known as AMPylation and UMPylation. The sequence is that of Protein nucleotidyltransferase YdiU from Geobacillus kaustophilus (strain HTA426).